The following is a 73-amino-acid chain: Large ribosomal subunit protein bL31 (73 aa).

The Zn(2+) site is built by C16, C18, C38, and C41.

Belongs to the bacterial ribosomal protein bL31 family. Type A subfamily. In terms of assembly, part of the 50S ribosomal subunit. The cofactor is Zn(2+).

In terms of biological role, binds the 23S rRNA. In Vibrio vulnificus (strain YJ016), this protein is Large ribosomal subunit protein bL31.